Consider the following 118-residue polypeptide: Large ribosomal subunit protein uL23c (118 aa).

This sequence belongs to the universal ribosomal protein uL23 family. As to quaternary structure, part of the 50S ribosomal subunit.

Its subcellular location is the plastid. It is found in the chloroplast. Binds to 23S rRNA. The protein is Large ribosomal subunit protein uL23c (rpl23) of Stigeoclonium helveticum (Green alga).